The chain runs to 344 residues: HTH-type transcriptional regulator XC_2801 (344 aa).

The HTH lysR-type domain occupies 3–60 (HDLNDTLIFVKVVEQGSFIAAANSLGLPKTTVSRKVQELETRLGARLLHRTTRRIGLT). The segment at residues 20–39 (FIAAANSLGLPKTTVSRKVQ) is a DNA-binding region (H-T-H motif).

Belongs to the LysR transcriptional regulatory family. In terms of assembly, interacts with the cyclic di-GMP effector XC_3703.

Its activity is regulated as follows. Activity is regulated by cyclic di-GMP. Cyclic di-GMP specifically binds to XC_3703, which inhibits the interaction of the XC_2801-XC_3703 complex with DNA and prevents the transcription of the target genes. Transcriptional regulator that directly or indirectly regulates the expression of virulence-related genes, including flhB, aaeA, fliL and flgG. Binds to the promoter of the target genes only in the presence of XC_3703. This is HTH-type transcriptional regulator XC_2801 from Xanthomonas campestris pv. campestris (strain 8004).